The chain runs to 604 residues: Microtubule-associated protein 70-4 (604 aa).

The tract at residues 1-33 is disordered; sequence MEERGFMSPSLAISASYREGGSKGMSRRRSMRP. The stretch at 49–351 forms a coiled coil; the sequence is DPVRIELNRL…ADRAAKSEAQ (303 aa). The required for targeting to microtubules stretch occupies residues 233–470; sequence IIDKMHRQKV…PLNHKSSEGT (238 aa). Disordered stretches follow at residues 367–422 and 434–495; these read LKGP…RSLT and GTSR…NDSV. Residues 371–385 show a composition bias toward low complexity; sequence TSSSSRGTSVGRSSS. Polar residues-rich tracts occupy residues 401-422 and 468-478; these read PKITSNGSLIKRTPSSQLRSLT and EGTSRGESPSS. A coiled-coil region spans residues 521–569; it reads LRDKDEAIEMLAKKVETLTKAMDVEAKKMRREVAVMGKEVAAMRVVDKG.

It belongs to the MAP70 family.

Its subcellular location is the cytoplasm. The protein localises to the cytoskeleton. In terms of biological role, plant-specific protein that interact with microtubules. The polypeptide is Microtubule-associated protein 70-4 (MAP70.4) (Arabidopsis thaliana (Mouse-ear cress)).